Here is a 557-residue protein sequence, read N- to C-terminus: TBCC domain-containing protein 1 (557 aa).

The 146-residue stretch at Thr-290–Leu-435 folds into the C-CAP/cofactor C-like domain.

It belongs to the TBCC family.

It is found in the cytoplasm. The protein resides in the cytoskeleton. It localises to the microtubule organizing center. The protein localises to the centrosome. Its subcellular location is the spindle pole. In terms of biological role, plays a role in the regulation of centrosome and Golgi apparatus positioning, with consequences on cell shape and cell migration. The sequence is that of TBCC domain-containing protein 1 (TBCCD1) from Homo sapiens (Human).